Consider the following 529-residue polypeptide: 3-ketoacyl-CoA synthase 20 (529 aa).

The interval 1-22 (MSHNQNQPHRPVPVHVTNAEPN) is disordered. The next 2 helical transmembrane spans lie at 52-72 (LYIL…SFTI) and 84-104 (FHFL…TAYF). Residues 103–396 (YFTTRPRRVF…FFATLVARKV (294 aa)) form the FAE domain. Active-site residues include cysteine 247, histidine 326, histidine 415, histidine 419, and asparagine 452.

This sequence belongs to the thiolase-like superfamily. Chalcone/stilbene synthases family. Expressed in aerial organs. Expressed in leaves, flowers, siliques and stems. Expressed in roots, young seedlings, leaves, flowers and siliques.

The protein resides in the membrane. The catalysed reaction is a very-long-chain acyl-CoA + malonyl-CoA + H(+) = a very-long-chain 3-oxoacyl-CoA + CO2 + CoA. The protein operates within lipid metabolism; fatty acid biosynthesis. Inhibited by K3 herbicides such as alachlor, allidochlor, anilofos, cafenstrole, fentrazamide and flufenacet. Strongly inhibited by metazachlor and only slightly by mefluidide. Mediates the synthesis of VLCFAs from 22 to 26 carbons in length (e.g. C22, C24, C26). Functionally redundant with KCS2 in the two-carbon elongation of C22 fatty acids that is required for cuticular wax and root suberin biosynthesis. This is 3-ketoacyl-CoA synthase 20 from Arabidopsis thaliana (Mouse-ear cress).